The primary structure comprises 864 residues: Paramyosin (864 aa).

Positions 1-30 (MSSLYRDLDSDVSSTRIVRHSYNVYRGSSP) are nonhelical region. Residues 31–853 (SSQNRLESRI…QTVRRSRSMS (823 aa)) are a coiled coil. The tract at residues 854–864 (VSREVTRVVRV) is nonhelical region.

The protein belongs to the paramyosin family. In terms of assembly, homodimer. Phosphorylated. Most abundantly expressed in muscle tissues from byssus retractor and adductor muscles. Low expression in foot, gill, inner mantle and outer mantle.

It localises to the cytoplasm. It is found in the myofibril. Paramyosin is a major structural component of many thick filaments isolated from invertebrate muscles. This chain is Paramyosin, found in Mytilus galloprovincialis (Mediterranean mussel).